We begin with the raw amino-acid sequence, 540 residues long: Probable ATP-dependent RNA helicase DDX28 (540 aa).

The Mitochondrial targeting signal motif lies at 3-18 (LTRPVRLFSLVTRLLL). A Q motif motif is present at residues 126–156 (GSFADLGLEPRVLHALQEAAPEVVQPTTVQS). The Helicase ATP-binding domain occupies 159-351 (IPSLLRGRHV…NKVASPDAVT (193 aa)). An ATP-binding site is contributed by 172 to 179 (AETGSGKT). Positions 180-191 (LSYLLPLLQRLL) match the Nuclear export signal motif. Positions 286–289 (DEAD) match the DEAD motif. The 160-residue stretch at 377 to 536 (KVAELVHILK…GLASSVKEPL (160 aa)) folds into the Helicase C-terminal domain. The Nuclear localization signal motif lies at 520–523 (RRRR).

It belongs to the DEAD box helicase family. Monomer. Found in a complex with GRSF1, DHX30, FASTKD2 and FASTKD5. Associates with the 16S mitochondrial rRNA (16S mt-rRNA) and with the mitochondrial ribosome large subunit (39S). In terms of tissue distribution, expressed in all tissues tested, including brain, placenta, lung, liver, skeletal muscle, kidney, pancreas, leukocytes, colon, small intestine, ovary and prostate.

It is found in the nucleus. Its subcellular location is the mitochondrion. The protein localises to the mitochondrion matrix. The protein resides in the mitochondrion nucleoid. The catalysed reaction is ATP + H2O = ADP + phosphate + H(+). Its function is as follows. Plays an essential role in facilitating the proper assembly of the mitochondrial large ribosomal subunit and its helicase activity is essential for this function. May be involved in RNA processing or transport. Has RNA and Mg(2+)-dependent ATPase activity. This is Probable ATP-dependent RNA helicase DDX28 (DDX28) from Homo sapiens (Human).